A 947-amino-acid polypeptide reads, in one-letter code: Translation initiation factor IF-2 (947 aa).

A disordered region spans residues 55 to 361 (TKDAQAGSAK…PVTERKFHEL (307 aa)). Residues 63-73 (AKDKQVAEQKA) are compositionally biased toward basic and acidic residues. Residues 76–90 (AKATTPQPAAATQEA) are compositionally biased toward low complexity. 3 stretches are compositionally biased toward basic and acidic residues: residues 103–116 (FKAE…EQAA), 125–134 (SNDRKSDYRQ), and 170–183 (NDGH…DKNR). Residues 190–204 (RQQDTGRQGQTQAGA) are compositionally biased toward low complexity. Basic and acidic residues-rich tracts occupy residues 225–249 (ARQR…RQEA), 257–267 (QTEDKKHREAS), and 294–311 (NRPD…DGQK). A compositionally biased stretch (low complexity) spans 316–334 (SWNSQNQVRNQKNSNWNNN). Positions 335–345 (KKNKKGKHHKN) are enriched in basic residues. The tr-type G domain maps to 448–617 (ERAPVVTIMG…LLVAEVEELK (170 aa)). The interval 457–464 (GHVDHGKT) is G1. Residue 457 to 464 (GHVDHGKT) coordinates GTP. The G2 stretch occupies residues 482-486 (GITQH). Positions 503 to 506 (DTPG) are G3. Residues 503-507 (DTPGH) and 557-560 (NKID) each bind GTP. The tract at residues 557-560 (NKID) is G4. Residues 593–595 (SAK) are G5.

This sequence belongs to the TRAFAC class translation factor GTPase superfamily. Classic translation factor GTPase family. IF-2 subfamily.

The protein resides in the cytoplasm. One of the essential components for the initiation of protein synthesis. Protects formylmethionyl-tRNA from spontaneous hydrolysis and promotes its binding to the 30S ribosomal subunits. Also involved in the hydrolysis of GTP during the formation of the 70S ribosomal complex. The chain is Translation initiation factor IF-2 from Streptococcus equi subsp. zooepidemicus (strain MGCS10565).